Reading from the N-terminus, the 177-residue chain is Large ribosomal subunit protein uL6 (177 aa).

This sequence belongs to the universal ribosomal protein uL6 family. In terms of assembly, part of the 50S ribosomal subunit.

This protein binds to the 23S rRNA, and is important in its secondary structure. It is located near the subunit interface in the base of the L7/L12 stalk, and near the tRNA binding site of the peptidyltransferase center. The sequence is that of Large ribosomal subunit protein uL6 from Aeromonas salmonicida (strain A449).